The primary structure comprises 744 residues: Prestin (744 aa).

Residues 1-75 (MDHAEENEIP…PITKWLPAYK (75 aa)) lie on the Cytoplasmic side of the membrane. A helical transmembrane segment spans residues 76–104 (FKEYVLGDLVSGISTGVLQLPQGLAFAML). Residues 105–108 (AAVP) are Extracellular-facing. Residues 109–126 (PVFGLYSSFYPVIMYCFF) form a helical membrane-spanning segment. Topologically, residues 127-137 (GTSRHISIGPF) are cytoplasmic. A helical membrane pass occupies residues 138–149 (AVISLMIGGVAV). The Extracellular portion of the chain corresponds to 150–168 (RLVPDDIVIPGGVNATNGT). Residues 158–168 (IPGGVNATNGT) carry the Involved in motor function motif. N-linked (GlcNAc...) asparagine glycosylation is found at Asn-163 and Asn-166. A helical transmembrane segment spans residues 169–196 (EARDALRVKVAMSVTLLSGIIQFCLGVC). Residues 197 to 206 (RFGFVAIYLT) lie on the Cytoplasmic side of the membrane. A helical membrane pass occupies residues 207–230 (EPLVRGFTTAAAVHVFTSMLKYLF). The Extracellular portion of the chain corresponds to 231-241 (GVKTKRYSGIF). Residues 242-253 (SVVYSTVAVLQN) constitute an intramembrane region (helical). Residues 254 to 258 (VKNLN) are Extracellular-facing. A helical membrane pass occupies residues 259-276 (VCSLGVGLMVFGLLLGGK). Over 277–291 (EFNERFKEKLPAPIP) the chain is Cytoplasmic. The helical transmembrane segment at 292–307 (LEFFAVVMGTGISAGF) threads the bilayer. The Extracellular segment spans residues 308–332 (NLHESYSVDVVGTLPLGLLPPANPD). The chain crosses the membrane as a helical span at residues 333-359 (TSLFHLVYVDAIAIAIVGFSVTISMAK). Residues 360–370 (TLANKHGYQVD) lie on the Cytoplasmic side of the membrane. A helical transmembrane segment spans residues 371 to 388 (GNQELIALGICNSIGSLF). Residues 389-396 (QTFSISCS) are Extracellular-facing. A helical membrane pass occupies residues 397–406 (LSRSLVQEGT). Ser-398 contributes to the salicylate binding site. At 407-410 (GGKT) the chain is on the cytoplasmic side. The helical transmembrane segment at 411-431 (QLAGCLASLMILLVILATGFL) threads the bilayer. At 432-436 (FESLP) the chain is on the extracellular side. Residues 437 to 464 (QAVLSAIVIVNLKGMFMQFSDLPFFWRT) traverse the membrane as a helical segment. Ser-465 is a topological domain (cytoplasmic). The chain crosses the membrane as a helical span at residues 466 to 481 (KIELTIWLTTFVSSLF). Residues 482 to 484 (LGL) are Extracellular-facing. Residues 485–504 (DYGLITAVIIALLTVIYRTQ) form a helical membrane-spanning segment. Positions 505 to 718 (SPSYTVLGQL…AVLGSQVREA (214 aa)) are extended region for STAS domain. Over 505–744 (SPSYTVLGQL…PNATPTTPEA (240 aa)) the chain is Cytoplasmic. The STAS domain maps to 525 to 713 (AYEEVKEIPG…HSIHDAVLGS (189 aa)). Positions 720-744 (AEQETTVLPPQEDMEPNATPTTPEA) are disordered.

This sequence belongs to the SLC26A/SulP transporter (TC 2.A.53) family. Homodimer. Interacts (via STAS domain) with CALM; this interaction is calcium-dependent and the STAS domain interacts with only one lobe of CALM which is an elongated conformation. Interacts with MYH1. In terms of tissue distribution, specifically expressed in outer hair cells of cochleae (at protein level). Not detected in other cells of the organ of Corti.

The protein resides in the lateral cell membrane. It carries out the reaction 2 hydrogencarbonate(in) + chloride(out) = 2 hydrogencarbonate(out) + chloride(in). Salicylate, an inhibitor of outer hair cell motility, acts as a competitive antagonist at the prestin anion-binding site. Its function is as follows. Voltage-sensitive motor protein that drives outer hair cell (OHC) electromotility (eM) and participates in sound amplification in the hearing organ. Converts changes in the transmembrane electric potential into mechanical displacements resulting in the coupling of its expansion to movement of a charged voltage sensor across the lipid membrane. The nature of the voltage sensor is not completely clear, and two models compete. In the first model, acts as an incomplete transporter where intracellular chloride anion acts as extrinsic voltage sensor that drives conformational change in the protein which is sufficient to produce a length change in the plane of the membrane and hence in the length of the OHC. The second model in which multiple charged amino acid residues are distributed at the intracellular and extracellular membrane interfaces that form an intrinsic voltage sensor, whose movement produces the non-linear capacitance (NLC). However, the effective voltage sensor may be the result of a hybrid voltage sensor assembled from intrinsic charge (charged residues) and extrinsic charge (bound anion). Notably, binding of anions to the anion-binding pocket partially neutralizes the intrinsic positive charge rather than to form an electrically negative sensor, therefore remaining charge may serve as voltage sensor that, after depolarization, moves from down (expanded state) to up (contracted) conformation, which is accompanied by an eccentric contraction of the intermembrane cross-sectional area of the protein as well as a major increase in the hydrophobic thickness of the protein having as consequences the plasma membrane thickening and the cell contraction after membrane depolarization. The anion-binding pocket transits from the inward-open (Down) state, where it is exposed toward the intracellular solvent in the absence of anion, to the occluded (Up) state upon anion binding. Salicylate competes for the anion-binding site and inhibits the voltage-sensor movement, and therefore inhibits the charge transfer and electromotility by displacing Cl(-) from the anion-binding site and by preventing the structural transitions to the contracted state. In addition, can act as a weak Cl(-)/HCO3(-) antiporter across the cell membrane and so regulate the intracellular pH of the outer hair cells (OHCs), while firstly found as being unable to mediate electrogenic anion transport. Moreover, supports a role in cardiac mechanical amplification serving as an elastic element to enhance the actomyosin- based sarcomere contraction system. The protein is Prestin of Rattus norvegicus (Rat).